A 568-amino-acid chain; its full sequence is Probable asparagine--tRNA ligase, cytoplasmic (568 aa).

It belongs to the class-II aminoacyl-tRNA synthetase family.

Its subcellular location is the cytoplasm. The catalysed reaction is tRNA(Asn) + L-asparagine + ATP = L-asparaginyl-tRNA(Asn) + AMP + diphosphate + H(+). Cytosolic asparaginyl-tRNA synthetase which catalyzes the specific attachment of asparagine to its cognate tRNA. This Schizosaccharomyces pombe (strain 972 / ATCC 24843) (Fission yeast) protein is Probable asparagine--tRNA ligase, cytoplasmic (nrs1).